Here is a 496-residue protein sequence, read N- to C-terminus: MSTEHFEELNDQQIVRREKMTALAEQGIDPFGKRFERSANSAELKAQYEDKSKEDLEELGQTAIIAGRIMTKRGKGKAGFAHIQDREGQIQIYVRKDDVSEENYEIFKKADLGDFIGVEGDVFKTNVGELSIHARKLTHLSKALRPLPEKFHGLTDIETRYRKRYLDLITNRESFDRFVTRSKIISEIRRYLDGLGFLEVETPVLHNEAGGAAARPFITHHNAQNIDMVLRIATELHLKRLIVGGMERVYEIGRIFRNEGMDATHNPEFTSIEVYQAYADYQDIMDLTEGIIQHTAKAVVGDGPVTYQGTEIAIHEPFKRIHMVDAIKEQTGVDFWQEMSFEEAKALAAEHKVPVEKHHTEVGQIINSFFEEYVEATLIQPTFVYGHPVAVSPLAKKNDEDPRFTDRFELFIMTKEYGNAFTELNDPIDQLERFEAQAKAKELGDDEATGVDYDYIEALEYGMPPTGGLGIGIDRLCMLLTDTTTIRDVLLFPTMK.

Positions 409 and 416 each coordinate Mg(2+).

The protein belongs to the class-II aminoacyl-tRNA synthetase family. In terms of assembly, homodimer. Requires Mg(2+) as cofactor.

It localises to the cytoplasm. The enzyme catalyses tRNA(Lys) + L-lysine + ATP = L-lysyl-tRNA(Lys) + AMP + diphosphate. The protein is Lysine--tRNA ligase of Streptococcus suis (strain 05ZYH33).